The primary structure comprises 556 residues: Formate--tetrahydrofolate ligase (556 aa).

Residue 65 to 72 (TPAGEGKT) coordinates ATP.

This sequence belongs to the formate--tetrahydrofolate ligase family.

The catalysed reaction is (6S)-5,6,7,8-tetrahydrofolate + formate + ATP = (6R)-10-formyltetrahydrofolate + ADP + phosphate. It participates in one-carbon metabolism; tetrahydrofolate interconversion. The sequence is that of Formate--tetrahydrofolate ligase from Clostridium cylindrosporum.